We begin with the raw amino-acid sequence, 388 residues long: Pepsin A (388 aa).

The signal sequence occupies residues 1–15 (MKWLLLLGLVALSEC). A propeptide spans 16-62 (IIYKVPLVRKKSLRRNLSEHGLLKDFLKKHNRNPASKYFPQTEAPTL) (activation peptide). Residues 76–385 (YFGTIGIGTP…DRANNQVGLA (310 aa)) form the Peptidase A1 domain. Asp94 is an active-site residue. A disulfide bridge connects residues Cys107 and Cys112. Phosphoserine is present on Ser130. Cys268 and Cys272 are disulfide-bonded. Asp277 is an active-site residue. Cys311 and Cys344 form a disulfide bridge.

It belongs to the peptidase A1 family.

It is found in the secreted. The catalysed reaction is Preferential cleavage: hydrophobic, preferably aromatic, residues in P1 and P1' positions. Cleaves 1-Phe-|-Val-2, 4-Gln-|-His-5, 13-Glu-|-Ala-14, 14-Ala-|-Leu-15, 15-Leu-|-Tyr-16, 16-Tyr-|-Leu-17, 23-Gly-|-Phe-24, 24-Phe-|-Phe-25 and 25-Phe-|-Tyr-26 bonds in the B chain of insulin.. Functionally, shows particularly broad specificity; although bonds involving phenylalanine and leucine are preferred, many others are also cleaved to some extent. The sequence is that of Pepsin A (PGA) from Macaca mulatta (Rhesus macaque).